The chain runs to 577 residues: 2-succinyl-5-enolpyruvyl-6-hydroxy-3-cyclohexene-1-carboxylate synthase (577 aa).

This sequence belongs to the TPP enzyme family. MenD subfamily. As to quaternary structure, homodimer. Requires Mg(2+) as cofactor. The cofactor is Mn(2+). It depends on thiamine diphosphate as a cofactor.

The enzyme catalyses isochorismate + 2-oxoglutarate + H(+) = 5-enolpyruvoyl-6-hydroxy-2-succinyl-cyclohex-3-ene-1-carboxylate + CO2. Its pathway is quinol/quinone metabolism; 1,4-dihydroxy-2-naphthoate biosynthesis; 1,4-dihydroxy-2-naphthoate from chorismate: step 2/7. It participates in quinol/quinone metabolism; menaquinone biosynthesis. Its function is as follows. Catalyzes the thiamine diphosphate-dependent decarboxylation of 2-oxoglutarate and the subsequent addition of the resulting succinic semialdehyde-thiamine pyrophosphate anion to isochorismate to yield 2-succinyl-5-enolpyruvyl-6-hydroxy-3-cyclohexene-1-carboxylate (SEPHCHC). This chain is 2-succinyl-5-enolpyruvyl-6-hydroxy-3-cyclohexene-1-carboxylate synthase, found in Porphyromonas gingivalis (strain ATCC BAA-308 / W83).